A 155-amino-acid chain; its full sequence is RNA pyrophosphohydrolase (155 aa).

The region spanning 5–147 is the Nudix hydrolase domain; the sequence is KYRPNVAAII…KRQVYRQVIA (143 aa). Residues 42–63 carry the Nudix box motif; it reads GGIDEGETPLEALHRELLEEIG.

This sequence belongs to the Nudix hydrolase family. RppH subfamily. Requires a divalent metal cation as cofactor.

Its function is as follows. Accelerates the degradation of transcripts by removing pyrophosphate from the 5'-end of triphosphorylated RNA, leading to a more labile monophosphorylated state that can stimulate subsequent ribonuclease cleavage. The chain is RNA pyrophosphohydrolase from Helicobacter pylori (strain G27).